A 691-amino-acid chain; its full sequence is Elongation factor G (691 aa).

One can recognise a tr-type G domain in the interval 8–283 (EDYRNFGIMA…AVVDYLPSPA (276 aa)). GTP is bound by residues 17-24 (AHIDAGKT), 81-85 (DTPGH), and 135-138 (NKMD).

This sequence belongs to the TRAFAC class translation factor GTPase superfamily. Classic translation factor GTPase family. EF-G/EF-2 subfamily.

It localises to the cytoplasm. In terms of biological role, catalyzes the GTP-dependent ribosomal translocation step during translation elongation. During this step, the ribosome changes from the pre-translocational (PRE) to the post-translocational (POST) state as the newly formed A-site-bound peptidyl-tRNA and P-site-bound deacylated tRNA move to the P and E sites, respectively. Catalyzes the coordinated movement of the two tRNA molecules, the mRNA and conformational changes in the ribosome. The sequence is that of Elongation factor G from Methylobacterium sp. (strain 4-46).